The sequence spans 459 residues: Bifunctional protein GlmU (459 aa).

A pyrophosphorylase region spans residues 1–229; it reads MSNFAIILAA…FDESLGVNDR (229 aa). UDP-N-acetyl-alpha-D-glucosamine contacts are provided by residues 8–11, lysine 22, glutamine 72, and 77–78; these read LAAG and GT. Aspartate 102 provides a ligand contact to Mg(2+). The UDP-N-acetyl-alpha-D-glucosamine site is built by glycine 139, glutamate 154, asparagine 169, and asparagine 227. Asparagine 227 serves as a coordination point for Mg(2+). Residues 230-250 are linker; it reads VALATAESVMRRRINHKHMVN. The segment at 251 to 459 is N-acetyltransferase; that stretch reads GVSFVNPEAT…TRLPHHPKNQ (209 aa). Positions 332 and 350 each coordinate UDP-N-acetyl-alpha-D-glucosamine. Histidine 362 (proton acceptor) is an active-site residue. Positions 365 and 376 each coordinate UDP-N-acetyl-alpha-D-glucosamine. Acetyl-CoA is bound by residues alanine 379, 385–386, serine 404, alanine 422, and arginine 439; that span reads NY.

This sequence in the N-terminal section; belongs to the N-acetylglucosamine-1-phosphate uridyltransferase family. It in the C-terminal section; belongs to the transferase hexapeptide repeat family. In terms of assembly, homotrimer. Mg(2+) is required as a cofactor.

Its subcellular location is the cytoplasm. The catalysed reaction is alpha-D-glucosamine 1-phosphate + acetyl-CoA = N-acetyl-alpha-D-glucosamine 1-phosphate + CoA + H(+). It catalyses the reaction N-acetyl-alpha-D-glucosamine 1-phosphate + UTP + H(+) = UDP-N-acetyl-alpha-D-glucosamine + diphosphate. It functions in the pathway nucleotide-sugar biosynthesis; UDP-N-acetyl-alpha-D-glucosamine biosynthesis; N-acetyl-alpha-D-glucosamine 1-phosphate from alpha-D-glucosamine 6-phosphate (route II): step 2/2. The protein operates within nucleotide-sugar biosynthesis; UDP-N-acetyl-alpha-D-glucosamine biosynthesis; UDP-N-acetyl-alpha-D-glucosamine from N-acetyl-alpha-D-glucosamine 1-phosphate: step 1/1. It participates in bacterial outer membrane biogenesis; LPS lipid A biosynthesis. In terms of biological role, catalyzes the last two sequential reactions in the de novo biosynthetic pathway for UDP-N-acetylglucosamine (UDP-GlcNAc). The C-terminal domain catalyzes the transfer of acetyl group from acetyl coenzyme A to glucosamine-1-phosphate (GlcN-1-P) to produce N-acetylglucosamine-1-phosphate (GlcNAc-1-P), which is converted into UDP-GlcNAc by the transfer of uridine 5-monophosphate (from uridine 5-triphosphate), a reaction catalyzed by the N-terminal domain. The polypeptide is Bifunctional protein GlmU (Streptococcus pneumoniae (strain 70585)).